The primary structure comprises 42 residues: Photosystem I reaction center subunit IX (42 aa).

A helical membrane pass occupies residues 7 to 27; the sequence is FLSLGPVLLVLWLSVQATLLI.

Belongs to the PsaJ family.

The protein localises to the cellular thylakoid membrane. In terms of biological role, may help in the organization of the PsaE and PsaF subunits. In Gloeothece citriformis (strain PCC 7424) (Cyanothece sp. (strain PCC 7424)), this protein is Photosystem I reaction center subunit IX.